An 82-amino-acid chain; its full sequence is DinI-like protein (82 aa).

It belongs to the DinI family.

This chain is DinI-like protein, found in Enterobacteria phage VT1-Sakai.